Here is an 87-residue protein sequence, read N- to C-terminus: DNA-directed RNA polymerase subunit Rpo5 (87 aa).

The protein belongs to the archaeal Rpo5/eukaryotic RPB5 RNA polymerase subunit family. In terms of assembly, part of the RNA polymerase complex.

It localises to the cytoplasm. It catalyses the reaction RNA(n) + a ribonucleoside 5'-triphosphate = RNA(n+1) + diphosphate. In terms of biological role, DNA-dependent RNA polymerase (RNAP) catalyzes the transcription of DNA into RNA using the four ribonucleoside triphosphates as substrates. The polypeptide is DNA-directed RNA polymerase subunit Rpo5 (Thermoplasma acidophilum (strain ATCC 25905 / DSM 1728 / JCM 9062 / NBRC 15155 / AMRC-C165)).